A 129-amino-acid chain; its full sequence is Acyl carrier protein 2, chloroplastic (129 aa).

The N-terminal 49 residues, 1–49 (MASAAASAVSFARPVKAICVNSVSFSALRKDNVSFRLQPVPQRFSVCCA), are a transit peptide targeting the chloroplast. Residues 52–127 (KETVEKVCDI…DAANLIDSLV (76 aa)) enclose the Carrier domain. The residue at position 87 (Ser87) is an O-(pantetheine 4'-phosphoryl)serine.

Belongs to the acyl carrier protein (ACP) family. 4'-phosphopantetheine is transferred from CoA to a specific serine of apo-ACP by acpS. This modification is essential for activity because fatty acids are bound in thioester linkage to the sulfhydryl of the prosthetic group.

The protein localises to the plastid. It is found in the chloroplast. It participates in lipid metabolism; fatty acid biosynthesis. Functionally, carrier of the growing fatty acid chain in fatty acid biosynthesis. The protein is Acyl carrier protein 2, chloroplastic (ACL1.2) of Hordeum vulgare (Barley).